A 199-amino-acid chain; its full sequence is NAD(P)H dehydrogenase (quinone) (199 aa).

The Flavodoxin-like domain occupies 4–190; sequence VLVLYYSAYG…AGARYQGKTI (187 aa). FMN is bound by residues 10-15 and 78-80; these read SAYGHI and TRF. Tyrosine 12 is a binding site for NAD(+). Residue tryptophan 98 participates in substrate binding. FMN-binding positions include 113 to 119 and histidine 134; that span reads STATQHG.

Belongs to the WrbA family. The cofactor is FMN.

The catalysed reaction is a quinone + NADH + H(+) = a quinol + NAD(+). It carries out the reaction a quinone + NADPH + H(+) = a quinol + NADP(+). This Rhodopseudomonas palustris (strain HaA2) protein is NAD(P)H dehydrogenase (quinone).